The sequence spans 779 residues: Pre-mRNA-splicing factor cef-1 (779 aa).

HTH myb-type domains are found at residues 1–56 (MPVV…DPSI) and 57–106 (KKIE…DEAE). DNA-binding regions (H-T-H motif) lie at residues 29–52 (WARVSSLLARKTPKQCKARWNEWL) and 80–102 (WRTIAPIVGRTANQCLERYQRLL). 4 disordered regions span residues 113 to 192 (LGLT…ESRR), 246 to 284 (EYQRAHFDPKKQQVGNKRKGEEDERDGKRRKGDKDPSVQ), 424 to 448 (TPLRAAGAGPGATPLRVGQTPLRTP), and 497 to 525 (WELELPDDQQEPKTAEQLEEDAAERDRRE). The span at 127–152 (SADDVRKLRPGEVDPDPETKPARPDT) shows a compositional bias: basic and acidic residues. The stretch at 157 to 204 (EDEKEMLSEARARLANTQGKKAKRKARERQQEESRRLAALQKRRELKT) forms a coiled coil. Basic and acidic residues-rich tracts occupy residues 246-256 (EYQRAHFDPKK) and 263-281 (RKGEEDERDGKRRKGDKDP). Residues 653 to 772 (DEEEEQISTM…EELDALTLNG (120 aa)) adopt a coiled-coil conformation.

Belongs to the CEF1 family. Associated with the spliceosome.

The protein localises to the cytoplasm. It is found in the nucleus. Its function is as follows. Involved in pre-mRNA splicing and cell cycle control. This is Pre-mRNA-splicing factor cef-1 (cef-1) from Neurospora crassa (strain ATCC 24698 / 74-OR23-1A / CBS 708.71 / DSM 1257 / FGSC 987).